A 320-amino-acid polypeptide reads, in one-letter code: uncharacterized protein (320 aa).

It belongs to the NAD(P)-dependent epimerase/dehydratase family.

This is an uncharacterized protein from Staphylococcus saprophyticus subsp. saprophyticus (strain ATCC 15305 / DSM 20229 / NCIMB 8711 / NCTC 7292 / S-41).